We begin with the raw amino-acid sequence, 251 residues long: Hydroxyacylglutathione hydrolase (251 aa).

The Zn(2+) site is built by His-53, His-55, Asp-57, His-58, His-110, Asp-127, and His-165.

It belongs to the metallo-beta-lactamase superfamily. Glyoxalase II family. Monomer. It depends on Zn(2+) as a cofactor.

It carries out the reaction an S-(2-hydroxyacyl)glutathione + H2O = a 2-hydroxy carboxylate + glutathione + H(+). Its pathway is secondary metabolite metabolism; methylglyoxal degradation; (R)-lactate from methylglyoxal: step 2/2. Functionally, thiolesterase that catalyzes the hydrolysis of S-D-lactoyl-glutathione to form glutathione and D-lactic acid. In Pectobacterium atrosepticum (strain SCRI 1043 / ATCC BAA-672) (Erwinia carotovora subsp. atroseptica), this protein is Hydroxyacylglutathione hydrolase.